The chain runs to 175 residues: Ribulose bisphosphate carboxylase small subunit, chloroplastic 2 (175 aa).

A chloroplast-targeting transit peptide spans 1–46 (MAPAVMASSATTVAPFQGLKSTAGLPISCRSGSTGLSSVSNGGRIR).

Belongs to the RuBisCO small chain family. As to quaternary structure, heterohexadecamer of 8 large and 8 small subunits.

It is found in the plastid. The protein resides in the chloroplast. RuBisCO catalyzes two reactions: the carboxylation of D-ribulose 1,5-bisphosphate, the primary event in carbon dioxide fixation, as well as the oxidative fragmentation of the pentose substrate. Both reactions occur simultaneously and in competition at the same active site. Although the small subunit is not catalytic it is essential for maximal activity. The protein is Ribulose bisphosphate carboxylase small subunit, chloroplastic 2 of Triticum aestivum (Wheat).